Consider the following 308-residue polypeptide: Glutathione synthetase (308 aa).

The ATP-grasp domain occupies K117 to E300. Y143–D198 provides a ligand contact to ATP. Mg(2+) contacts are provided by E271 and N273.

The protein belongs to the prokaryotic GSH synthase family. The cofactor is Mg(2+). It depends on Mn(2+) as a cofactor.

The catalysed reaction is gamma-L-glutamyl-L-cysteine + glycine + ATP = glutathione + ADP + phosphate + H(+). It functions in the pathway sulfur metabolism; glutathione biosynthesis; glutathione from L-cysteine and L-glutamate: step 2/2. This chain is Glutathione synthetase, found in Anaplasma centrale.